Consider the following 324-residue polypeptide: Succinylglutamate desuccinylase (324 aa).

Positions 53, 56, and 148 each coordinate Zn(2+). The active site involves Glu211.

It belongs to the AspA/AstE family. Succinylglutamate desuccinylase subfamily. Zn(2+) serves as cofactor.

The enzyme catalyses N-succinyl-L-glutamate + H2O = L-glutamate + succinate. The protein operates within amino-acid degradation; L-arginine degradation via AST pathway; L-glutamate and succinate from L-arginine: step 5/5. Its function is as follows. Transforms N(2)-succinylglutamate into succinate and glutamate. The protein is Succinylglutamate desuccinylase of Acinetobacter baumannii (strain AB0057).